The sequence spans 297 residues: Nucleotide-binding protein DSY4845 (297 aa).

13–20 is a binding site for ATP; the sequence is GLSGAGKT. GTP is bound at residue 64-67; it reads DLRG.

Belongs to the RapZ-like family.

Its function is as follows. Displays ATPase and GTPase activities. The chain is Nucleotide-binding protein DSY4845 from Desulfitobacterium hafniense (strain Y51).